Reading from the N-terminus, the 965-residue chain is Transmembrane channel-like protein 5 (965 aa).

2 stretches are compositionally biased toward polar residues: residues methionine 1–tyrosine 10 and serine 20–arginine 31. The disordered stretch occupies residues methionine 1–proline 235. At methionine 1 to lysine 417 the chain is on the extracellular side. Basic and acidic residues predominate over residues threonine 61 to alanine 70. Positions glutamine 166–proline 181 are enriched in polar residues. A Phosphoserine modification is found at serine 248. The helical transmembrane segment at phenylalanine 418–glycine 438 threads the bilayer. The Cytoplasmic segment spans residues glutamate 439–glutamine 444. The helical transmembrane segment at phenylalanine 445–tyrosine 467 threads the bilayer. Residues threonine 468–glutamine 484 are Extracellular-facing. A helical transmembrane segment spans residues leucine 485–serine 505. Residues methionine 506 to histidine 578 are Cytoplasmic-facing. The chain crosses the membrane as a helical span at residues valine 579–leucine 599. Residues alanine 600 to proline 613 lie on the Extracellular side of the membrane. The helical transmembrane segment at glycine 614 to tyrosine 634 threads the bilayer. Topologically, residues serine 635–asparagine 657 are cytoplasmic. The chain crosses the membrane as a helical span at residues isoleucine 658 to leucine 678. Topologically, residues serine 679–aspartate 691 are extracellular. A helical transmembrane segment spans residues isoleucine 692 to phenylalanine 712. Topologically, residues leucine 713–tryptophan 747 are cytoplasmic. The helical transmembrane segment at leucine 748 to phenylalanine 768 threads the bilayer. The Extracellular portion of the chain corresponds to tyrosine 769 to phenylalanine 794. Residues phenylalanine 795–isoleucine 815 form a helical membrane-spanning segment. Topologically, residues tryptophan 816–asparagine 859 are cytoplasmic. The helical transmembrane segment at leucine 860 to leucine 880 threads the bilayer. Residues tyrosine 881–alanine 965 lie on the Extracellular side of the membrane.

Belongs to the TMC family.

The protein resides in the membrane. Its function is as follows. Probable component of an ion channel. Molecular function hasn't been characterized yet. This is Transmembrane channel-like protein 5 from Rattus norvegicus (Rat).